Consider the following 440-residue polypeptide: Ribosomal protein uS12 methylthiotransferase RimO (440 aa).

The MTTase N-terminal domain maps to 2 to 118; that stretch reads KKAGIIHLGC…FVSLITSNGE (117 aa). 6 residues coordinate [4Fe-4S] cluster: Cys11, Cys47, Cys81, Cys154, Cys158, and Cys161. One can recognise a Radical SAM core domain in the interval 140–370; sequence ISPNFWVYVK…MSTQKEISKK (231 aa). Residues 373–440 enclose the TRAM domain; it reads AKLLGREFDV…RAYDLLGELV (68 aa).

This sequence belongs to the methylthiotransferase family. RimO subfamily. Requires [4Fe-4S] cluster as cofactor.

It localises to the cytoplasm. The catalysed reaction is L-aspartate(89)-[ribosomal protein uS12]-hydrogen + (sulfur carrier)-SH + AH2 + 2 S-adenosyl-L-methionine = 3-methylsulfanyl-L-aspartate(89)-[ribosomal protein uS12]-hydrogen + (sulfur carrier)-H + 5'-deoxyadenosine + L-methionine + A + S-adenosyl-L-homocysteine + 2 H(+). Catalyzes the methylthiolation of an aspartic acid residue of ribosomal protein uS12. The sequence is that of Ribosomal protein uS12 methylthiotransferase RimO from Dictyoglomus thermophilum (strain ATCC 35947 / DSM 3960 / H-6-12).